The sequence spans 486 residues: MSSLKERKEAFVSGLEGGSILEINVVTSIALTSYLCANLISYNDTQNIPLGIDFVLNWVAMLLSFTLYSQDIYLLTTLCLIPSIGWFLLNYKRNLKQSKNTVKHTTKEAVQKFELTKKPFLTAYRSGMLILTCLAILAVDFQIFPRRFAKVETWGTSLMDLGVGSFVFSNGIVSSRGLFREKMKDKKDKASSIKKIFAATRSGTTLLILGLSRLFFVKNLEYQEHVTEYGVHWNFFITLSLLPPVLVLIDPITSYIPQCILAMLFSTVYQLFLIKDDSLLTYLVLSDRNTFINANREGLISFVGYCSIFLWGQTIGFFILGNKKTTNNLYKCSVTVSRDKKNRTLWDRLTTVGPSLGLLIWFIITYALSEGLYLIHPQTVSRRFANMPYVLWVVCYNTAFLLCYSLVDKLFGNSSNFYRISTLLEAMNCNGLAMFLISNVSTGLVNMCIPTIDQNDKVSIVILLIYAAFLAMVSFSLYKHKIFIKL.

A helical membrane pass occupies residues 20 to 42 (ILEINVVTSIALTSYLCANLISY). Residue Asn43 is glycosylated (N-linked (GlcNAc...) asparagine). 8 helical membrane passes run 48–68 (IPLG…FTLY), 71–91 (DIYL…LLNY), 119–139 (PFLT…ILAV), 153–173 (TWGT…NGIV), 197–216 (FAAT…RLFF), 229–249 (YGVH…LVLI), 254–274 (SYIP…LFLI), and 299–319 (LISF…GFFI). Asn342 carries N-linked (GlcNAc...) asparagine glycosylation. The next 2 helical transmembrane spans lie at 355–375 (SLGL…LYLI) and 387–407 (MPYV…YSLV). An N-linked (GlcNAc...) asparagine glycan is attached at Asn413. A run of 2 helical transmembrane segments spans residues 432–452 (LAMF…IPTI) and 458–478 (VSIV…FSLY).

It belongs to the PIGW family.

The protein localises to the endoplasmic reticulum membrane. The protein operates within glycolipid biosynthesis; glycosylphosphatidylinositol-anchor biosynthesis. Functionally, probable acetyltransferase, which acetylates the inositol ring of phosphatidylinositol during biosynthesis of GPI-anchor. This Candida glabrata (strain ATCC 2001 / BCRC 20586 / JCM 3761 / NBRC 0622 / NRRL Y-65 / CBS 138) (Yeast) protein is GPI-anchored wall transfer protein 1 (GWT1).